The sequence spans 212 residues: Ribosomal RNA small subunit methyltransferase G (212 aa).

S-adenosyl-L-methionine-binding positions include Gly80, Leu85, 131-132 (AE), and Arg146.

It belongs to the methyltransferase superfamily. RNA methyltransferase RsmG family.

The protein resides in the cytoplasm. The enzyme catalyses guanosine(527) in 16S rRNA + S-adenosyl-L-methionine = N(7)-methylguanosine(527) in 16S rRNA + S-adenosyl-L-homocysteine. Its function is as follows. Specifically methylates the N7 position of guanine in position 527 of 16S rRNA. This Xanthomonas oryzae pv. oryzae (strain MAFF 311018) protein is Ribosomal RNA small subunit methyltransferase G.